The primary structure comprises 151 residues: Ribonuclease H (151 aa).

The 142-residue stretch at 2–143 (SSNVIEIYAD…ADALANKGVD (142 aa)) folds into the RNase H type-1 domain. 4 residues coordinate Mg(2+): Asp11, Glu49, Asp71, and Asp135.

This sequence belongs to the RNase H family. As to quaternary structure, monomer. The cofactor is Mg(2+).

The protein localises to the cytoplasm. The enzyme catalyses Endonucleolytic cleavage to 5'-phosphomonoester.. Its function is as follows. Endonuclease that specifically degrades the RNA of RNA-DNA hybrids. The polypeptide is Ribonuclease H (Methylobacillus flagellatus (strain ATCC 51484 / DSM 6875 / VKM B-1610 / KT)).